A 467-amino-acid polypeptide reads, in one-letter code: Argininosuccinate lyase (467 aa).

This sequence belongs to the lyase 1 family. Argininosuccinate lyase subfamily.

Its subcellular location is the cytoplasm. The catalysed reaction is 2-(N(omega)-L-arginino)succinate = fumarate + L-arginine. It participates in amino-acid biosynthesis; L-arginine biosynthesis; L-arginine from L-ornithine and carbamoyl phosphate: step 3/3. The polypeptide is Argininosuccinate lyase (Methylibium petroleiphilum (strain ATCC BAA-1232 / LMG 22953 / PM1)).